We begin with the raw amino-acid sequence, 137 residues long: Ribosomal RNA large subunit methyltransferase H (137 aa).

S-adenosyl-L-methionine contacts are provided by residues Leu-56, Gly-85, and 104–109 (LSPLTF).

It belongs to the RNA methyltransferase RlmH family. In terms of assembly, homodimer.

The protein localises to the cytoplasm. It carries out the reaction pseudouridine(1915) in 23S rRNA + S-adenosyl-L-methionine = N(3)-methylpseudouridine(1915) in 23S rRNA + S-adenosyl-L-homocysteine + H(+). Its function is as follows. Specifically methylates the pseudouridine at position 1915 (m3Psi1915) in 23S rRNA. This Prochlorococcus marinus (strain MIT 9515) protein is Ribosomal RNA large subunit methyltransferase H.